A 356-amino-acid chain; its full sequence is Histidinol-phosphate aminotransferase (356 aa).

An N6-(pyridoxal phosphate)lysine modification is found at Lys-214.

This sequence belongs to the class-II pyridoxal-phosphate-dependent aminotransferase family. Histidinol-phosphate aminotransferase subfamily. In terms of assembly, homodimer. Requires pyridoxal 5'-phosphate as cofactor.

The catalysed reaction is L-histidinol phosphate + 2-oxoglutarate = 3-(imidazol-4-yl)-2-oxopropyl phosphate + L-glutamate. It participates in amino-acid biosynthesis; L-histidine biosynthesis; L-histidine from 5-phospho-alpha-D-ribose 1-diphosphate: step 7/9. This chain is Histidinol-phosphate aminotransferase, found in Escherichia coli O7:K1 (strain IAI39 / ExPEC).